Consider the following 360-residue polypeptide: 3-isopropylmalate dehydrogenase (360 aa).

An NAD(+)-binding site is contributed by 76–89 (GPKWEPLDYSLRPE). Substrate contacts are provided by arginine 96, arginine 106, arginine 134, and aspartate 224. Mg(2+) contacts are provided by aspartate 224, aspartate 248, and aspartate 252. Position 282–294 (282–294 (GSAPDIAGRGIAN)) interacts with NAD(+).

This sequence belongs to the isocitrate and isopropylmalate dehydrogenases family. LeuB type 1 subfamily. As to quaternary structure, homodimer. Requires Mg(2+) as cofactor. Mn(2+) is required as a cofactor.

The protein localises to the cytoplasm. The enzyme catalyses (2R,3S)-3-isopropylmalate + NAD(+) = 4-methyl-2-oxopentanoate + CO2 + NADH. It functions in the pathway amino-acid biosynthesis; L-leucine biosynthesis; L-leucine from 3-methyl-2-oxobutanoate: step 3/4. Catalyzes the oxidation of 3-carboxy-2-hydroxy-4-methylpentanoate (3-isopropylmalate) to 3-carboxy-4-methyl-2-oxopentanoate. The product decarboxylates to 4-methyl-2 oxopentanoate. This Methylococcus capsulatus (strain ATCC 33009 / NCIMB 11132 / Bath) protein is 3-isopropylmalate dehydrogenase.